The primary structure comprises 454 residues: Membrane-bound lytic murein transglycosylase F (454 aa).

A signal peptide spans 1 to 24 (MRRPLRRVTVVLLWVALAIGVAWF). The tract at residues 25 to 265 (YDYRRSMQSL…IYNRYYTAVD (241 aa)) is non-LT domain. The segment at 266-454 (TFDYVDVKKF…YDILKQKKAV (189 aa)) is LT domain. The active site involves Glu311.

This sequence in the N-terminal section; belongs to the bacterial solute-binding protein 3 family. It in the C-terminal section; belongs to the transglycosylase Slt family.

It localises to the cell outer membrane. The catalysed reaction is Exolytic cleavage of the (1-&gt;4)-beta-glycosidic linkage between N-acetylmuramic acid (MurNAc) and N-acetylglucosamine (GlcNAc) residues in peptidoglycan, from either the reducing or the non-reducing ends of the peptidoglycan chains, with concomitant formation of a 1,6-anhydrobond in the MurNAc residue.. Murein-degrading enzyme that degrades murein glycan strands and insoluble, high-molecular weight murein sacculi, with the concomitant formation of a 1,6-anhydromuramoyl product. Lytic transglycosylases (LTs) play an integral role in the metabolism of the peptidoglycan (PG) sacculus. Their lytic action creates space within the PG sacculus to allow for its expansion as well as for the insertion of various structures such as secretion systems and flagella. The sequence is that of Membrane-bound lytic murein transglycosylase F from Desulfosudis oleivorans (strain DSM 6200 / JCM 39069 / Hxd3) (Desulfococcus oleovorans).